The primary structure comprises 526 residues: Neutrophil cytosol factor 2 (526 aa).

3 TPR repeats span residues 37–70 (SRIC…DKHL), 71–104 (AVAY…LRGN), and 121–154 (CEVL…KSEP). Threonine 233 is subject to Phosphothreonine. The SH3 1 domain maps to 240–299 (LEGEAHRVLFGFVPETKEELQVMPGNIVFVLKKGNDNWATVMFNGQKGLVPCNYLEPVEL). Low complexity predominate over residues 303–315 (PQQQPQEESSPQS). A disordered region spans residues 303–346 (PQQQPQEESSPQSDIPAPPSSKAPGRPQLSPGQKQKEEPKEVKL). Over residues 336 to 345 (KQKEEPKEVK) the composition is skewed to basic and acidic residues. Residues 351–429 (PYTLKVHYKY…YCLTLWCENT (79 aa)) form the PB1 domain. Serine 399 carries the post-translational modification Phosphoserine. The segment at 433-458 (QGFPDEPKESEKADANNQTTEPQLKK) is disordered. A compositionally biased stretch (basic and acidic residues) spans 437 to 446 (DEPKESEKAD). Residues 457 to 516 (KKGSQVEALFSYEATQPEDLEFQEGDIILVLSKVNEEWLEGECKGKVGIFPKVFVEDCAT) form the SH3 2 domain.

The protein belongs to the NCF2/NOXA1 family. As to quaternary structure, component of the phagocyte NADPH oxidase complex composed of an obligatory core heterodimer formed by the membrane proteins CYBA and CYBB and the cytosolic regulatory subunits NCF1/p47-phox, NCF2/p67-phox, NCF4/p40-phox and the small GTPase RAC1 or RAC2. Part of a cytosolic complex composed at least by NCF1, NCF2 and NCF4. Interacts with NCF4. Interacts (via the C-terminal SH3 domain) with NCF1 (via C-terminus). Interacts with SYTL1 and RAC1. May interact with NOXO1. Interacts with S100A8 and calprotectin (S100A8/9). Interacts with GBP7 (via GB1/RHD3-type G domain). Interacts with CYBB; the interaction is enhanced in the presence of GBP7.

The protein resides in the cytoplasm. Subunit of the phagocyte NADPH oxidase complex that mediates the transfer of electrons from cytosolic NADPH to O2 to produce the superoxide anion (O2(-)). In the activated complex, electrons are first transferred from NADPH to flavin adenine dinucleotide (FAD) and subsequently transferred via two heme molecules to molecular oxygen, producing superoxide through an outer-sphere reaction. Activation of the NADPH oxidase complex is initiated by the assembly of cytosolic subunits of the NADPH oxidase complex with the core NADPH oxidase complex to form a complex at the plasma membrane or phagosomal membrane. This activation process is initiated by phosphorylation dependent binding of the cytosolic NCF1/p47-phox subunit to the C-terminus of CYBA/p22-phox. This Homo sapiens (Human) protein is Neutrophil cytosol factor 2.